We begin with the raw amino-acid sequence, 66 residues long: Defensin-B1 (66 aa).

Residues Met-1–Gly-23 form the signal peptide. 3 disulfide bridges follow: Cys-29/Cys-56, Cys-36/Cys-50, and Cys-40/Cys-57. A propeptide spanning residues Val-61–Gly-66 is cleaved from the precursor.

Belongs to the beta-defensin family. Expressed at low levels in kidney, lung, and spleen.

It is found in the secreted. Has bactericidal activity. May act as a ligand for C-C chemokine receptor CCR6. Positively regulates the sperm motility and bactericidal activity in a CCR6-dependent manner. Binds to CCR6 and triggers Ca2+ mobilization in the sperm which is important for its motility. In Ornithorhynchus anatinus (Duckbill platypus), this protein is Defensin-B1.